A 912-amino-acid polypeptide reads, in one-letter code: MAPLFLPLLATLVLAWIPVALADALEGDSSEDRAFRVRIAGDAPLQGVLGGALTIPCHVHYLRPSPSRRAAQGSPRVKWTFLSGGREAEVLVARGLRVKVSEAYRFRVALPAYPASLTDVSLVLSELRPNDSGIYRCEVQHGIDDSSDAVEVKVKGVVFLYREGSARYAFSFAGAQEACARIGARIATPEQLYAAYLGGYEQCDAGWLSDQTVRYPIQTPREACYGDMDGFPGVRNYGVVDPDDLYDVYCYAEELNGELFLGAPPDKLTLEEARTYCQERGAKIATTGQLYAAWDGGLDRCSSGWLSDGSVRYPIVTPSQRCGGGLPGVKTLFLFPNQTGFPNKHSRFNVYCFRDSAQPSAIPEAANPASHLASDALEAIVTVTETLEELKLPQEAVESESRGAIYSIPIIEDGGGGSSTPEDPAEAPRTLLEFETQSIVPPLGSSEEEGKVLEQEEKYRGEEEKEEEEEEEEVEDEALWAWPSELSSLDPEAPLPTEPVPEESLTQASPPVRAALQPGVSPPPYDEPEAPRPPRVLGPPTKTLPTPREGNLASPPPSTLVGAREIEEETGGPELSGAPRGESEETGSSEDAPSLLPATRAPGDTRDLETPSEENSRRTVPAGTSVRAQPVLPTDSASRGGVAVAPSSGDCVPSPCHNGGTCLEEEEGVRCLCLPGYGGDLCDVGLHFCSPGWDAFQGACYKHFSARRSWEEAENKCRMYGAHLASISTPEEQDFINNRYREYQWIGLNDRTIEGDFLWSDGVPLLYENWNPGQPDSYFLSGENCVVMVWHDQGQWSDVPCNYHLSYTCKMGLVSCGPPPELPLAEVFGRPRLRYEVDTVLRYRCREGLTQRNLPLIRCQENGRWGLPQISCVPRRPARALRPVEAQEGRPWRLVGHWKARLNPSPNPAPGP.

Residues 1–22 form the signal peptide; it reads MAPLFLPLLATLVLAWIPVALA. Residues 36–155 form the Ig-like V-type domain; it reads RVRIAGDAPL…SSDAVEVKVK (120 aa). Intrachain disulfides connect C57–C137, C179–C250, C203–C224, C277–C352, and C301–C322. Residue N130 is glycosylated (N-linked (GlcNAc...) asparagine). 2 consecutive Link domains span residues 157 to 252 and 257 to 354; these read VVFL…YCYA and GELF…YCFR. N337 carries an N-linked (GlcNAc...) asparagine glycan. 2 disordered regions span residues 408–427 and 438–651; these read IPII…PAEA and SIVP…SGDC. A Phosphoserine modification is found at S418. The O-linked (Xyl...) (chondroitin sulfate) serine glycan is linked to S418. A compositionally biased stretch (basic and acidic residues) spans 448 to 463; that stretch reads EEGKVLEQEEKYRGEE. Over residues 464–478 the composition is skewed to acidic residues; that stretch reads EKEEEEEEEEVEDEA. The segment covering 520 to 537 has biased composition (pro residues); it reads VSPPPYDEPEAPRPPRVL. Over residues 603-617 the composition is skewed to basic and acidic residues; sequence GDTRDLETPSEENSR. Residues 647 to 683 form the EGF-like domain; sequence SSGDCVPSPCHNGGTCLEEEEGVRCLCLPGYGGDLCD. Intrachain disulfides connect C651/C662, C656/C671, C673/C682, C689/C700, C717/C809, C785/C801, C816/C859, and C845/C872. Residues 683 to 811 form the C-type lectin domain; that stretch reads DVGLHFCSPG…NYHLSYTCKM (129 aa). One can recognise a Sushi domain in the interval 814–874; it reads VSCGPPPELP…WGLPQISCVP (61 aa).

This sequence belongs to the aggrecan/versican proteoglycan family. As to quaternary structure, interacts with TNR. Post-translationally, O-glycosylated; contains chondroitin sulfate. Brain; expressed in cerebellar astrocytes but not in neurons.

Its subcellular location is the secreted. The protein localises to the extracellular space. The protein resides in the extracellular matrix. Its function is as follows. May play a role in the terminally differentiating and the adult nervous system during postnatal development. Could stabilize interactions between hyaluronan (HA) and brain proteoglycans. The chain is Brevican core protein (BCAN) from Bos taurus (Bovine).